Here is a 269-residue protein sequence, read N- to C-terminus: MLEEINYDTKLFGLIGKNIKYTLSPYIHNFSFTTLGINAVYLVFDLDEMKFNRIINGLLEIAEGLNVTIPYKEEVMKYLDNTDTYSTRIQAVNTIYKKSGYNTDYLAIKNLVRKKIGNMSGYECYVYGAGGAAKAAAFALSELGCSSISIVNRTNLRANELVELLNKNGYNASIKENCNSTSNIVVVNSTPNPSVVPENCIQKSELVIEFVYKPVETELIKNAKKYGIKYIDGLEILVNQAVEAEKIWFNKSVSDEKIIEYLYARKLVW.

Shikimate-binding positions include 22–24 and threonine 68; that span reads TLS. The active-site Proton acceptor is lysine 72. Shikimate contacts are provided by asparagine 93 and aspartate 104. NADP(+)-binding positions include 128-132, 152-157, and phenylalanine 210; these read GAGGA and NRTNLR. Tyrosine 212 contacts shikimate. Glycine 233 contacts NADP(+).

It belongs to the shikimate dehydrogenase family. Homodimer.

The enzyme catalyses shikimate + NADP(+) = 3-dehydroshikimate + NADPH + H(+). It participates in metabolic intermediate biosynthesis; chorismate biosynthesis; chorismate from D-erythrose 4-phosphate and phosphoenolpyruvate: step 4/7. Functionally, involved in the biosynthesis of the chorismate, which leads to the biosynthesis of aromatic amino acids. Catalyzes the reversible NADPH linked reduction of 3-dehydroshikimate (DHSA) to yield shikimate (SA). The polypeptide is Shikimate dehydrogenase (NADP(+)) (Saccharolobus islandicus (strain L.S.2.15 / Lassen #1) (Sulfolobus islandicus)).